Reading from the N-terminus, the 325-residue chain is NADH-quinone oxidoreductase subunit H (325 aa).

The next 8 helical transmembrane spans lie at 11–31 (ILLT…CGAF), 81–101 (VIFT…FAIV), 114–134 (IGIL…LFAG), 154–174 (LSYE…AGSF), 186–206 (VWNV…GVAV), 237–257 (FFVG…TLFF), 265–285 (LPPF…FILI), and 304–324 (ICLP…LWQA).

Belongs to the complex I subunit 1 family. In terms of assembly, NDH-1 is composed of 13 different subunits. Subunits NuoA, H, J, K, L, M, N constitute the membrane sector of the complex.

It localises to the cell inner membrane. The enzyme catalyses a quinone + NADH + 5 H(+)(in) = a quinol + NAD(+) + 4 H(+)(out). Its function is as follows. NDH-1 shuttles electrons from NADH, via FMN and iron-sulfur (Fe-S) centers, to quinones in the respiratory chain. The immediate electron acceptor for the enzyme in this species is believed to be ubiquinone. Couples the redox reaction to proton translocation (for every two electrons transferred, four hydrogen ions are translocated across the cytoplasmic membrane), and thus conserves the redox energy in a proton gradient. This subunit may bind ubiquinone. The chain is NADH-quinone oxidoreductase subunit H from Shigella flexneri serotype 5b (strain 8401).